The following is a 279-amino-acid chain: BEN domain-containing protein 6 (279 aa).

Residues 1–15 (MQKIVQTDEITNTQA) show a composition bias toward polar residues. Disordered regions lie at residues 1–65 (MQKI…LAEL) and 134–172 (RATN…TDEK). Positions 62-99 (LAELSKEELCAKIKSLKEKLTNTRKENSRLRQSLVMLQ) form a coiled coil. Over residues 134-148 (RATNNSSPDSFASTC) the composition is skewed to polar residues. Positions 162–172 (KPEEEHQTDEK) are enriched in basic and acidic residues. The region spanning 171–271 (EKQFQIEKWQ…NCTKKPNLSK (101 aa)) is the BEN domain.

As to quaternary structure, interacts (via BEN domain) with RBPJ.

The protein resides in the nucleus. In terms of biological role, acts as a corepressor of recombining binding protein suppressor hairless (RBPJ) and inhibits Notch signaling in neural stem cells, thereby opposing their self-renewal and promoting neurogenesis. The polypeptide is BEN domain-containing protein 6 (BEND6) (Homo sapiens (Human)).